We begin with the raw amino-acid sequence, 424 residues long: Histidine--tRNA ligase (424 aa).

The protein belongs to the class-II aminoacyl-tRNA synthetase family. Homodimer.

It localises to the cytoplasm. It carries out the reaction tRNA(His) + L-histidine + ATP = L-histidyl-tRNA(His) + AMP + diphosphate + H(+). The sequence is that of Histidine--tRNA ligase from Escherichia coli (strain SE11).